The following is a 140-amino-acid chain: Nucleoside diphosphate kinase (140 aa).

Lys-11, Phe-59, Arg-87, Thr-93, Arg-104, and Asn-114 together coordinate ATP. His-117 (pros-phosphohistidine intermediate) is an active-site residue.

Belongs to the NDK family. Mg(2+) serves as cofactor.

It is found in the cytoplasm. The enzyme catalyses a 2'-deoxyribonucleoside 5'-diphosphate + ATP = a 2'-deoxyribonucleoside 5'-triphosphate + ADP. It carries out the reaction a ribonucleoside 5'-diphosphate + ATP = a ribonucleoside 5'-triphosphate + ADP. Its function is as follows. Major role in the synthesis of nucleoside triphosphates other than ATP. The ATP gamma phosphate is transferred to the NDP beta phosphate via a ping-pong mechanism, using a phosphorylated active-site intermediate. This is Nucleoside diphosphate kinase from Metallosphaera sedula (strain ATCC 51363 / DSM 5348 / JCM 9185 / NBRC 15509 / TH2).